Here is a 391-residue protein sequence, read N- to C-terminus: Uroporphyrinogen decarboxylase, chloroplastic (391 aa).

Residues 71–75 (RQAGR), Phe90, Ser120, Asp121, Tyr198, Ser253, and His368 each bind substrate.

Belongs to the uroporphyrinogen decarboxylase family. Homodimer.

It localises to the plastid. The protein resides in the chloroplast. It catalyses the reaction uroporphyrinogen III + 4 H(+) = coproporphyrinogen III + 4 CO2. Its pathway is porphyrin-containing compound metabolism; protoporphyrin-IX biosynthesis; coproporphyrinogen-III from 5-aminolevulinate: step 4/4. Catalyzes the decarboxylation of four acetate groups of uroporphyrinogen-III to yield coproporphyrinogen-III. This is Uroporphyrinogen decarboxylase, chloroplastic (DCUP) from Nicotiana tabacum (Common tobacco).